Reading from the N-terminus, the 416-residue chain is Phosphoglycerate kinase (416 aa).

Residues V23, D24, F25, N26, R39, S62, H63, G65, R66, L121, R122, H169, and R170 each contribute to the (2R)-3-phosphoglycerate site. G213 lines the ADP pocket. G213 contacts CDP. AMP contacts are provided by A214 and K215. Residue A214 participates in ATP binding. A214 is a Mg(2+) binding site. D218 contacts CDP. D218 lines the Mg(2+) pocket. Position 219 (K219) interacts with AMP. Residue K219 coordinates ATP. G237 serves as a coordination point for ADP. G237 contributes to the CDP binding site. Residues G238 and G312 each coordinate AMP. The ATP site is built by G238 and G312. CDP is bound by residues G337 and F342. Residue F342 participates in ADP binding. E343 lines the AMP pocket. The ATP site is built by E343, D374, and T375. D374 serves as a coordination point for Mg(2+).

It belongs to the phosphoglycerate kinase family. In terms of assembly, monomer. The cofactor is Mg(2+).

It localises to the cytoplasm. Its subcellular location is the mitochondrion. The catalysed reaction is (2R)-3-phosphoglycerate + ATP = (2R)-3-phospho-glyceroyl phosphate + ADP. Its pathway is carbohydrate degradation; glycolysis; pyruvate from D-glyceraldehyde 3-phosphate: step 2/5. In terms of biological role, catalyzes one of the two ATP producing reactions in the glycolytic pathway via the reversible conversion of 1,3-diphosphoglycerate to 3-phosphoglycerate. Both L- and D- forms of purine and pyrimidine nucleotides can be used as substrates, but the activity is much lower on pyrimidines. Negatively regulates the biosynthesis of acetyl-CoA from pyruvate in the mitochondrion. This chain is Phosphoglycerate kinase (pgkA), found in Agaricus bisporus (White button mushroom).